A 171-amino-acid chain; its full sequence is Secretion monitor (171 aa).

A signal peptide spans 1–30 (MIGILNRWRQFGRRYFWPHLLLGMVAASLG).

This sequence belongs to the SecM family.

It is found in the cytoplasm. The protein resides in the cytosol. The protein localises to the periplasm. Regulates secA expression by translational coupling of the secM secA operon. Translational pausing at a specific Pro residue 5 residues before the end of the protein may allow disruption of a mRNA repressor helix that normally suppresses secA translation initiation. This is Secretion monitor from Pectobacterium atrosepticum (strain SCRI 1043 / ATCC BAA-672) (Erwinia carotovora subsp. atroseptica).